The sequence spans 343 residues: C5a anaphylatoxin chemotactic receptor 2 (343 aa).

Topologically, residues 1–44 (MLNDTTSKDYEYEYDQEQYSDLLNVPVDCPAGNCFSNDAYLIVL) are extracellular. N-linked (GlcNAc...) asparagine glycosylation occurs at Asn-3. The chain crosses the membrane as a helical span at residues 45–67 (LGLYSVIFLVGVPGNTLLAWVTW). Residues 68–78 (KESRHRLGASW) lie on the Cytoplasmic side of the membrane. Residues 79 to 101 (FLHLTMADLLCCVSLPFLAVPIA) form a helical membrane-spanning segment. At 102–120 (QKGHWPYGTAGCWLLSSIT) the chain is on the extracellular side. Cys-113 and Cys-192 are joined by a disulfide. A helical transmembrane segment spans residues 121–143 (VLSMYASVLLLTGLSGDLFLLAF). The Cytoplasmic portion of the chain corresponds to 144 to 155 (RPSWKNADQRTC). The helical transmembrane segment at 156–178 (GVRVVQVSSWMLALLLTVPGAVY) threads the bilayer. Over 179–208 (RKLLQEHYPPRLVCGTNYGGSVTAEVTITT) the chain is Extracellular. A helical membrane pass occupies residues 209 to 231 (VRFLFGFLVPLVFMASCHGILQR). Over 232-243 (QMARRHWPLGTA) the chain is Cytoplasmic. Residues 244–266 (VVVGFFICWTPFHLLRVIIAVAS) traverse the membrane as a helical segment. The Extracellular portion of the chain corresponds to 267–280 (SHSPLLAWALEAEP). The chain crosses the membrane as a helical span at residues 281 to 300 (LVTGLALAHSALNPIMFLYF). The Cytoplasmic segment spans residues 301-343 (GRKQLCKSLQAACHWALRDLQDEEESAVTKVSTSQEMVSEMPV). Ser-326 is modified (phosphoserine).

This sequence belongs to the G-protein coupled receptor 1 family. In terms of assembly, interacts with C3 (the anaphylatoxin peptide C3a and the adipogenic hormone ASP); the interaction occurs with higher affinity for ASP, enhancing the phosphorylation and activation of GPR77, recruitment of ARRB2 to the cell surface and endocytosis of GRP77.

It is found in the cell membrane. Its function is as follows. Receptor for the chemotactic and inflammatory C3a, C4a and C5a anaphylatoxin peptides and also for their dearginated forms ASP/C3adesArg, C4adesArg and C5adesArg respectively. Couples weakly to G(i)-mediated signaling pathways. This is C5a anaphylatoxin chemotactic receptor 2 (C5ar2) from Rattus norvegicus (Rat).